The chain runs to 539 residues: Glycine betaine transporter 2 (539 aa).

The next 12 membrane-spanning stretches (helical) occupy residues 44–64 (LTNPVFWLSGSFLSLFVLLAL), 85–105 (FGAYWQVLLLLNFLIGLALAF), 129–149 (IVLCTLLAGGGVFWAAAEPIA), 175–195 (FMHWGFLAWAILGCLSSIVLM), 231–251 (CSIIAVAAGTIGPIGFLGLQI), 265–285 (FITQSMVIVAAIVMYTLSALS), 299–319 (IILSVLLIGYILFFGPTSFII), 348–368 (WWTVFFWGWFIGYGPMMAIFI), 380–400 (LILSISIAAPLITCFWFSIVG), 426–446 (VLLAITGELPFPMIISVLFLI), 480–500 (FWGLMMGVVAIALISMGSGGI), and 503–523 (LQSFIVITAVPVSFILLPSIL).

Belongs to the BCCT transporter (TC 2.A.15) family.

It is found in the cell inner membrane. Functionally, involved in the uptake of the osmoprotectant glycine betaine. The chain is Glycine betaine transporter 2 from Vibrio parahaemolyticus serotype O3:K6 (strain RIMD 2210633).